The chain runs to 261 residues: 4-phosphopantoate--beta-alanine ligase (261 aa).

ATP contacts are provided by residues arginine 17, arginine 39, 181 to 182 (DL), 187 to 188 (RS), and 199 to 200 (NI).

This sequence belongs to the archaeal phosphopantothenate synthetase family. As to quaternary structure, homodimer.

The enzyme catalyses (R)-4-phosphopantoate + beta-alanine + ATP = (R)-4'-phosphopantothenate + AMP + diphosphate + H(+). It participates in cofactor biosynthesis; coenzyme A biosynthesis. In terms of biological role, catalyzes the condensation of (R)-4-phosphopantoate and beta-alanine to 4'-phosphopantothenate in the CoA biosynthesis pathway. The sequence is that of 4-phosphopantoate--beta-alanine ligase from Thermococcus onnurineus (strain NA1).